The chain runs to 35 residues: Z-limacoditoxin(1)-Dv1 (35 aa).

The signal sequence occupies residues 1–22; it reads MKKTFLPIFLVILLASYALANP. Residue Gln23 is modified to Pyrrolidone carboxylic acid. Residue Pro32 is modified to Proline amide.

This sequence belongs to the limacoditoxin-1 (ACP-like) family. In terms of tissue distribution, expressed by the venom secretory cell of the spine. The spine is a cuticular structure containing a single large nucleated venom-secreting cell at its base. It is an independent unit capable of producing, storing and injecting venom. On the back of D.vulnerans caterpillars, spines are grouped together by 50 to 100 to form scoli, of which there are eight in D.vulnerans.

It localises to the secreted. Potently activates insect G protein-coupled receptor. It activates the ACP receptor (ACPR) from the mosquito A.aegypti (EC(50)=0.55 nM) with a potency comparable to that of the endogenous ligand. Has no activity on receptors of the closely related neuropeptides adipokinetic hormone and corazonin. In vivo, does not reveal any observable effects when injected into crickets (A.domesticus). Does not induce increase in intracellular calcium in mouse DRG neurons, suggesting that it does not induce pain. This is Z-limacoditoxin(1)-Dv1 from Doratifera vulnerans (Mottled cup moth).